Consider the following 872-residue polypeptide: Leucine--tRNA ligase (872 aa).

The 'HIGH' region signature appears at 42–52 (PYPSGNLHMGH). The 'KMSKS' region motif lies at 631–635 (KMSKS). K634 contacts ATP.

The protein belongs to the class-I aminoacyl-tRNA synthetase family.

It is found in the cytoplasm. It carries out the reaction tRNA(Leu) + L-leucine + ATP = L-leucyl-tRNA(Leu) + AMP + diphosphate. The protein is Leucine--tRNA ligase of Blochmanniella pennsylvanica (strain BPEN).